A 4543-amino-acid polypeptide reads, in one-letter code: Low-density lipoprotein receptor-related protein 1 (4543 aa).

Positions 1–21 (MGPLLALAGCLLALLAAPAAR) are cleaved as a signal peptide. The Extracellular segment spans residues 22–4419 (ALEAPKTCSP…EFIVGEQQSG (4398 aa)). LDL-receptor class A domains follow at residues 27 to 68 (KTCS…ICPQ) and 72 to 112 (SRCQ…HCRE). Disulfide bonds link Cys29–Cys42, Cys36–Cys55, Cys49–Cys66, Cys74–Cys87, Cys81–Cys100, and Cys94–Cys110. The 39-residue stretch at 113–151 (QLANCTALGCQHHCVPTLSGPACYCNNSFQLAEDRRSCK) folds into the EGF-like 1 domain. An N-linked (GlcNAc...) asparagine glycan is attached at Asn116. Intrachain disulfides connect Cys117–Cys126, Cys122–Cys135, Cys137–Cys150, Cys156–Cys166, Cys162–Cys175, and Cys177–Cys190. A glycan (N-linked (GlcNAc...) asparagine) is linked at Asn138. An EGF-like 2; calcium-binding domain is found at 152–191 (DFDECTVYGTCSQTCTNTEGSYTCSCVEGYLLQPDNRSCK). Residues Asn187 and Asn276 are each glycosylated (N-linked (GlcNAc...) asparagine). 3 LDL-receptor class B repeats span residues 294 to 336 (GNFY…DPAM), 337 to 380 (GKVF…DLVS), and 381 to 424 (RLVY…FENY). The N-linked (GlcNAc...) asparagine glycan is linked to Asn359. A glycan (N-linked (GlcNAc...) asparagine) is linked at Asn448. The region spanning 476–522 (RSHACEPDQFGKPGGCSDICLLGNSHKSRTCRCRSGFSLGSDGKSCK) is the EGF-like 3 domain. 3 cysteine pairs are disulfide-bonded: Cys480–Cys495, Cys491–Cys506, and Cys508–Cys521. LDL-receptor class B repeat units lie at residues 573-615 (GFIY…DWMG), 616-661 (NNLY…DPLN), 662-712 (GWMY…DIPA), and 713-756 (KILY…YSSF). Residue Asn731 is glycosylated (N-linked (GlcNAc...) asparagine). The 41-residue stretch at 801 to 841 (GSNKCRVNNGGCSSLCLATPRGRQCACAEDQILGADSVTCE) folds into the EGF-like 4 domain. Disulfide bonds link Cys805-Cys816, Cys812-Cys825, Cys827-Cys840, Cys852-Cys864, Cys859-Cys877, Cys871-Cys888, Cys893-Cys905, Cys900-Cys918, Cys912-Cys929, Cys934-Cys946, Cys941-Cys959, Cys953-Cys969, Cys974-Cys987, Cys982-Cys1000, Cys994-Cys1009, Cys1013-Cys1025, Cys1020-Cys1038, Cys1032-Cys1049, Cys1060-Cys1073, Cys1067-Cys1086, Cys1080-Cys1095, Cys1102-Cys1116, Cys1110-Cys1129, Cys1123-Cys1138, Cys1143-Cys1157, Cys1150-Cys1170, Cys1164-Cys1180, Cys1183-Cys1194, Cys1190-Cys1204, Cys1206-Cys1219, Cys1225-Cys1235, Cys1231-Cys1244, and Cys1246-Cys1259. LDL-receptor class A domains are found at residues 850 to 890 (PQCQ…LCHQ), 891 to 931 (HTCP…TCSA), 932 to 971 (RTCSPNQFSCASGRCIPISWTCDLDDDCGDRSDESASCAY), 972 to 1011 (PTCFPLTQFTCNNGRCININWRCDNDNDCGDNSDEAGCSH), 1011 to 1051 (HSCS…NCTN), 1058 to 1097 (GGCHTDEFQCRLDGLCIPMRWRCDGDTDCMDSSDEKNCEG), 1100 to 1140 (HVCD…NCES), and 1141 to 1180 (LVCKPPSHTCANNTSICLPPEKLCDGSDDCGDGSDEGELC). 6 residues coordinate Ca(2+): Trp869, Asp872, Asp874, Asp876, Asp882, and Glu883. A glycan (N-linked (GlcNAc...) asparagine) is linked at Asn926. Positions 1030, 1033, 1035, 1037, 1043, and 1044 each coordinate Ca(2+). N-linked (GlcNAc...) asparagine glycosylation is present at Asn1048. Ca(2+) contacts are provided by Trp1078, Asp1081, Asp1083, Asp1085, Asp1091, and Glu1092. 2 N-linked (GlcNAc...) asparagine glycosylation sites follow: Asn1152 and Asn1153. EGF-like domains lie at 1181–1220 (DQCSLNNGGCSHNCTVAPGEGIVCSCPLGMELGADNKTCQ) and 1221–1260 (IQSYCAKHLKCSQKCEQDKYNVKCSCYEGWMLEPDGESCR). 2 N-linked (GlcNAc...) asparagine glycosylation sites follow: Asn1193 and Asn1216. Asn1305 carries N-linked (GlcNAc...) asparagine glycosylation. LDL-receptor class B repeat units lie at residues 1307–1353 (SSLY…DWIA), 1354–1396 (GNIY…DPRY), 1397–1443 (GILF…DYLE), 1444–1488 (KRIL…YGGE), and 1489–1529 (VYWT…YHPS). N-linked (GlcNAc...) asparagine glycosylation occurs at Asn1509. In terms of domain architecture, EGF-like 7 spans 1534-1577 (APNPCEANGGKGPCSHLCLINYNRTLSCACPHLMKLDKDNTTCY). Intrachain disulfides connect Cys1538/Cys1551, Cys1547/Cys1561, and Cys1563/Cys1576. N-linked (GlcNAc...) asparagine glycosylation is found at Asn1556, Asn1573, Asn1614, and Asn1643. LDL-receptor class B repeat units follow at residues 1625-1667 (QRIY…DWVS), 1668-1711 (RNLF…HPLH), 1712-1751 (GKLYWTDGDNISVANMDGSNRTLLFTNQRGPVGLAIDYPE), and 1752-1796 (SKLY…MGDK). Residues Asn1721, Asn1731, Asn1761, and Asn1823 are each glycosylated (N-linked (GlcNAc...) asparagine). An EGF-like 8 domain is found at 1842-1883 (GSNPCSVNNGDCSQLCLPTSETSRSCMCTAGYSLKSGQQSCE). 3 cysteine pairs are disulfide-bonded: Cys1846/Cys1857, Cys1853/Cys1867, and Cys1869/Cys1882. The N-linked (GlcNAc...) asparagine glycan is linked to Asn1929. LDL-receptor class B repeat units lie at residues 1930-1972 (DTIY…DWIA), 1973-2015 (GNIY…HPEK), 2016-2059 (GYLF…DYED), and 2060-2103 (GKLY…FEDY). 2 N-linked (GlcNAc...) asparagine glycosylation sites follow: Asn1991 and Asn2044. 2 N-linked (GlcNAc...) asparagine glycosylation sites follow: Asn2113 and Asn2123. One can recognise an EGF-like 9 domain in the interval 2151–2191 (GTNVCAQNNGGCQQLCLFRGGGRRTCACAHGMLSEDGVSCR). Disulfide bonds link Cys2155/Cys2166, Cys2162/Cys2176, and Cys2178/Cys2190. 5 LDL-receptor class B repeats span residues 2247–2288 (NRIF…HRGW), 2289–2337 (DTLY…DECQ), 2338–2382 (NLMF…DHRA), 2383–2425 (EKIY…YGDY), and 2426–2467 (IFWT…VAND). An N-linked (GlcNAc...) asparagine glycan is attached at Asn2466. The region spanning 2472-2512 (ELSPCRVNNGGCQDLCLLTPKGHVNCSCRGERVLQEDFTCK) is the EGF-like 10 domain. 3 disulfide bridges follow: Cys2476–Cys2487, Cys2483–Cys2497, and Cys2499–Cys2511. Asn2496 carries N-linked (GlcNAc...) asparagine glycosylation. An N-linked (GlcNAc...) asparagine glycan is attached at Asn2515. LDL-receptor class A domains are found at residues 2516–2557 (STCN…YCSS), 2558–2596 (RKCKKGFLHCMNGRCVASRFWCNGVDDCGDNSDEVPCNK), 2597–2635 (TSCAATEFRCRDGSCIGNSSRCNQFIDCEDASDEMNCTA), 2636–2684 (TDCS…NCPG), 2688–2730 (PKCP…RQDK), 2730–2769 (KFCYPVQFECNNHRCISKLWVCDGADDCGDGSDEDSRCRL), and 2770–2812 (TTCS…GCLY). 6 disulfides stabilise this stretch: Cys2518/Cys2531, Cys2526/Cys2544, Cys2538/Cys2555, Cys2560/Cys2572, Cys2567/Cys2585, and Cys2579/Cys2594. Residue Asn2595 is glycosylated (N-linked (GlcNAc...) asparagine). 15 cysteine pairs are disulfide-bonded: Cys2599-Cys2611, Cys2606-Cys2624, Cys2618-Cys2633, Cys2638-Cys2660, Cys2654-Cys2673, Cys2667-Cys2682, Cys2690-Cys2702, Cys2697-Cys2715, Cys2709-Cys2724, Cys2732-Cys2744, Cys2739-Cys2757, Cys2751-Cys2767, Cys2772-Cys2785, Cys2779-Cys2798, and Cys2792-Cys2810. Residues Asn2614 and Asn2632 are each glycosylated (N-linked (GlcNAc...) asparagine). The N-linked (GlcNAc...) asparagine glycan is linked to Asn2813. LDL-receptor class A domains are found at residues 2814 to 2853 (NTCDEREFMCGNRQCIPKHFVCDHDDDCGDGSDESPECEY), 2854 to 2897 (PTCG…RCSS), and 2900 to 2938 (SKCNDSFFMCKNGKCIPEALLCDNNNDCADGSDELNCFI). 15 cysteine pairs are disulfide-bonded: Cys2816–Cys2828, Cys2823–Cys2841, Cys2835–Cys2851, Cys2856–Cys2868, Cys2863–Cys2882, Cys2876–Cys2895, Cys2902–Cys2914, Cys2909–Cys2927, Cys2921–Cys2936, Cys2941–Cys2953, Cys2949–Cys2962, Cys2964–Cys2977, Cys2983–Cys2993, Cys2989–Cys3002, and Cys3004–Cys3018. Asn2903 carries N-linked (GlcNAc...) asparagine glycosylation. The region spanning 2939-2978 (NECLNKKLSGCSQECEDLKIGYKCRCRPGFRLKDDGKTCI) is the EGF-like 11 domain. The 41-residue stretch at 2979–3019 (DIDECSTTYPCSQKCINTLGSYKCLCIEGYKLKPDNPTSCK) folds into the EGF-like 12; calcium-binding domain. 2 N-linked (GlcNAc...) asparagine glycosylation sites follow: Asn3045 and Asn3086. LDL-receptor class B repeat units lie at residues 3066–3110 (QMIY…DWVG), 3111–3153 (GNLY…DVQN), 3154–3197 (GYLY…DYIN), 3198–3240 (SRIY…FEDY), and 3241–3281 (IYWT…YHPY). The N-linked (GlcNAc...) asparagine glycan is linked to Asn3176. N-linked (GlcNAc...) asparagine glycosylation occurs at Asn3261. The EGF-like 13 domain maps to 3287 to 3328 (PNHPCKTNNAGCSNLCLLSPGGGHKCACPTNFYLGSDGKTCV). 3 cysteine pairs are disulfide-bonded: Cys3291–Cys3302, Cys3298–Cys3312, and Cys3314–Cys3327. LDL-receptor class A domains follow at residues 3329 to 3368 (SNCTASQFVCKNDKCIPFWWKCDTEDDCGDRSDEPEDCPE), 3369 to 3407 (FKCRPGQFQCSTGICTNPAFICDGDNDCQDNSDEANCDI), 3408 to 3447 (HVCLPSQFKCTNTNRCIPGIFRCNGQDNCGDGEDEKDCPE), 3448 to 3488 (VTCA…NCTQ), 3489 to 3530 (MTCG…ECDE), 3531 to 3569 (RTCEPYQFRCKNNRCVPGRWQCDYDNDCGDNSDEESCTP), 3570 to 3608 (RPCSESEFSCANGRCIAGRWKCDGDHDCADGSDEKDCIP), 3608 to 3646 (PRCEFDQYQCKNGHCIPMRWRCDADADCMDGTDEEDCGT), 3649 to 3689 (RTCP…ECLK), 3690 to 3730 (FQCP…DCES), and 3736 to 3776 (KSCS…SCSH). Residue Asn3330 is glycosylated (N-linked (GlcNAc...) asparagine). Intrachain disulfides connect Cys3331–Cys3343, Cys3338–Cys3356, Cys3350–Cys3366, Cys3371–Cys3383, Cys3378–Cys3396, Cys3390–Cys3405, Cys3410–Cys3423, Cys3417–Cys3436, Cys3430–Cys3445, Cys3450–Cys3463, Cys3457–Cys3476, Cys3470–Cys3486, Cys3491–Cys3504, Cys3498–Cys3517, Cys3511–Cys3528, Cys3533–Cys3545, Cys3540–Cys3558, Cys3552–Cys3567, Cys3572–Cys3584, Cys3579–Cys3597, Cys3591–Cys3606, Cys3610–Cys3622, Cys3617–Cys3635, Cys3629–Cys3644, Cys3658–Cys3676, Cys3670–Cys3687, Cys3692–Cys3706, Cys3700–Cys3719, Cys3713–Cys3728, Cys3738–Cys3752, Cys3747–Cys3765, Cys3759–Cys3774, Cys3783–Cys3796, Cys3790–Cys3805, Cys3807–Cys3820, Cys3826–Cys3836, Cys3832–Cys3845, and Cys3847–Cys3858. N-linked (GlcNAc...) asparagine glycosylation is present at Asn3485. Asn3659 carries N-linked (GlcNAc...) asparagine glycosylation. 2 consecutive EGF-like domains span residues 3779–3821 (KSYD…NSCQ) and 3822–3859 (DVNECLRFGTCSQLCNNTKGSHVCSCAKNFMKTDNMCK). A glycan (N-linked (GlcNAc...) asparagine) is linked at Asn3786. N-linked (GlcNAc...) asparagine glycosylation is present at Asn3837. LDL-receptor class B repeat units follow at residues 3910-3952 (NKIY…THLN), 3969-4011 (GNIY…DPLR), 4012-4055 (GTMY…DYHN), and 4056-4100 (ERLY…FEDY). A Recognition site for proteolytical processing motif is present at residues 3939-3942 (RNRR). Asn3952 is a glycosylation site (N-linked (GlcNAc...) asparagine). Asn4074 and Asn4124 each carry an N-linked (GlcNAc...) asparagine glycan. EGF-like domains lie at 4146–4182 (VTNPCDRKKCEWLCLLSPSGPVCTCPNGKRLDNGTCV), 4195–4231 (TTDTCDLVCLNGGSCFLNARKQAKCRCQPRYNGERCQ), 4231–4267 (QINQCSDYCQNGGLCTASPSGMPTCRCPTGFTGSRCD), 4267–4303 (DQQVCTNYCHNNGSCTVNQGNQPNCRCPPTFIGDRCQ), 4303–4339 (QYQQCFNYCENNGVCQMSRDGVKQCRCPPQFEGAQCQ), 4339–4374 (QDNKCSRCQEGKCNINRQSGDVSCICPDGKIAPSCL), and 4372–4409 (SCLTCDSYCLNGGTCSISDKTQLPECLCPLEVTGMRCE). 21 disulfide bridges follow: Cys4150–Cys4159, Cys4155–Cys4168, Cys4170–Cys4181, Cys4199–Cys4209, Cys4203–Cys4219, Cys4221–Cys4230, Cys4235–Cys4245, Cys4239–Cys4255, Cys4257–Cys4266, Cys4271–Cys4281, Cys4275–Cys4291, Cys4293–Cys4302, Cys4307–Cys4317, Cys4311–Cys4327, Cys4329–Cys4338, Cys4343–Cys4351, Cys4346–Cys4362, Cys4364–Cys4373, Cys4376–Cys4386, Cys4380–Cys4397, and Cys4399–Cys4408. Asn4178 is a glycosylation site (N-linked (GlcNAc...) asparagine). The N-linked (GlcNAc...) asparagine glycan is linked to Asn4278. A helical membrane pass occupies residues 4420 to 4443 (RTASIVIPILLLLLLLAVVAFAWY). Residues 4444 to 4543 (KWRIKGAKGF…ADDDLTDPLA (100 aa)) are Cytoplasmic-facing. The NPXY motif motif lies at 4501–4506 (FTNPVY). The tract at residues 4522 to 4543 (STDEKRELLARGADDDLTDPLA) is disordered. The span at 4523–4535 (TDEKRELLARGAD) shows a compositional bias: basic and acidic residues.

Belongs to the LDLR family. In terms of assembly, binds vitellogenin and LRPAP1 (alpha 2-macroglobulin). Post-translationally, cleaved into a 85 kDa membrane-spanning subunit (LRP-85) and a 515 kDa large extracellular domain (LRP-515) that remains non-covalently associated. As to expression, somatic.

It localises to the membrane. It is found in the coated pit. In terms of biological role, endocytic receptor involved in endocytosis and in phagocytosis of apoptotic cells. Involved in cellular lipid homeostasis. Involved in the plasma clearance of chylomicron remnants and activated LRPAP1 (alpha 2-macroglobulin), as well as the local metabolism of complexes between plasminogen activators and their endogenous inhibitors. Acts as an alpha-2-macroglobulin receptor. In Gallus gallus (Chicken), this protein is Low-density lipoprotein receptor-related protein 1 (LRP1).